We begin with the raw amino-acid sequence, 200 residues long: 3-isopropylmalate dehydratase small subunit (200 aa).

Belongs to the LeuD family. LeuD type 1 subfamily. Heterodimer of LeuC and LeuD.

It carries out the reaction (2R,3S)-3-isopropylmalate = (2S)-2-isopropylmalate. Its pathway is amino-acid biosynthesis; L-leucine biosynthesis; L-leucine from 3-methyl-2-oxobutanoate: step 2/4. Its function is as follows. Catalyzes the isomerization between 2-isopropylmalate and 3-isopropylmalate, via the formation of 2-isopropylmaleate. In Saccharopolyspora erythraea (strain ATCC 11635 / DSM 40517 / JCM 4748 / NBRC 13426 / NCIMB 8594 / NRRL 2338), this protein is 3-isopropylmalate dehydratase small subunit.